Consider the following 122-residue polypeptide: Prefoldin subunit 1 (122 aa).

Ala2 carries the N-acetylalanine modification.

The protein belongs to the prefoldin subunit beta family. As to quaternary structure, heterohexamer of two PFD-alpha type and four PFD-beta type subunits.

Binds specifically to cytosolic chaperonin (c-CPN) and transfers target proteins to it. Binds to nascent polypeptide chain and promotes folding in an environment in which there are many competing pathways for nonnative proteins. This is Prefoldin subunit 1 (PFDN1) from Homo sapiens (Human).